The primary structure comprises 375 residues: Queuine tRNA-ribosyltransferase (375 aa).

Residue aspartate 89 is the Proton acceptor of the active site. Substrate is bound by residues aspartate 89–phenylalanine 93, aspartate 143, glutamine 185, and glycine 212. Positions glycine 243–aspartate 249 are RNA binding. The Nucleophile role is filled by aspartate 262. Residues threonine 267 to arginine 271 are RNA binding; important for wobble base 34 recognition. Residues cysteine 300, cysteine 302, cysteine 305, and histidine 331 each contribute to the Zn(2+) site.

Belongs to the queuine tRNA-ribosyltransferase family. As to quaternary structure, homodimer. Within each dimer, one monomer is responsible for RNA recognition and catalysis, while the other monomer binds to the replacement base PreQ1. Zn(2+) is required as a cofactor.

The catalysed reaction is 7-aminomethyl-7-carbaguanine + guanosine(34) in tRNA = 7-aminomethyl-7-carbaguanosine(34) in tRNA + guanine. It participates in tRNA modification; tRNA-queuosine biosynthesis. Catalyzes the base-exchange of a guanine (G) residue with the queuine precursor 7-aminomethyl-7-deazaguanine (PreQ1) at position 34 (anticodon wobble position) in tRNAs with GU(N) anticodons (tRNA-Asp, -Asn, -His and -Tyr). Catalysis occurs through a double-displacement mechanism. The nucleophile active site attacks the C1' of nucleotide 34 to detach the guanine base from the RNA, forming a covalent enzyme-RNA intermediate. The proton acceptor active site deprotonates the incoming PreQ1, allowing a nucleophilic attack on the C1' of the ribose to form the product. After dissociation, two additional enzymatic reactions on the tRNA convert PreQ1 to queuine (Q), resulting in the hypermodified nucleoside queuosine (7-(((4,5-cis-dihydroxy-2-cyclopenten-1-yl)amino)methyl)-7-deazaguanosine). This chain is Queuine tRNA-ribosyltransferase, found in Pseudoalteromonas translucida (strain TAC 125).